We begin with the raw amino-acid sequence, 163 residues long: Nucleotide-binding protein YajQ (163 aa).

The protein belongs to the YajQ family.

Functionally, nucleotide-binding protein. The polypeptide is Nucleotide-binding protein YajQ (Shigella flexneri).